The primary structure comprises 454 residues: Phenylalanine--tRNA ligase, mitochondrial (454 aa).

Residues 141–144, arginine 163, 170–172, 177–179, glutamate 266, and phenylalanine 291 each bind substrate; these read SAHQ, VHY, and QME. Positions 327 to 347 are disordered; that stretch reads KSISTSSSSSSSSSSSSSSTL. The segment covering 328–347 has biased composition (low complexity); that stretch reads SISTSSSSSSSSSSSSSSTL. Positions 361–454 constitute an FDX-ACB domain; the sequence is SKYPSCFKDV…LENHLSVKLR (94 aa).

It belongs to the class-II aminoacyl-tRNA synthetase family. Monomer.

Its subcellular location is the mitochondrion matrix. It catalyses the reaction tRNA(Phe) + L-phenylalanine + ATP = L-phenylalanyl-tRNA(Phe) + AMP + diphosphate + H(+). Its function is as follows. Is responsible for the charging of tRNA(Phe) with phenylalanine in mitochondrial translation. The chain is Phenylalanine--tRNA ligase, mitochondrial (mpheS) from Dictyostelium discoideum (Social amoeba).